The primary structure comprises 623 residues: Procollagen galactosyltransferase 1 (623 aa).

The N-terminal stretch at 1-30 is a signal peptide; the sequence is MAAAPRACKGHGRPLPVLLLLLLLALPPLG. Residues Asn97, Asn185, and Asn382 are each glycosylated (N-linked (GlcNAc...) asparagine). A compositionally biased stretch (basic and acidic residues) spans 589 to 607; that stretch reads RAKSQKMREQQALSREAKN. The tract at residues 589–623 is disordered; it reads RAKSQKMREQQALSREAKNSDVLQSPLDSAARDEL. Residues 620–623 carry the Prevents secretion from ER motif; sequence RDEL.

Belongs to the glycosyltransferase 25 family. Post-translationally, N-glycosylated.

Its subcellular location is the endoplasmic reticulum lumen. It catalyses the reaction (5R)-5-hydroxy-L-lysyl-[collagen] + UDP-alpha-D-galactose = (5R)-5-O-(beta-D-galactosyl)-5-hydroxy-L-lysyl-[collagen] + UDP + H(+). Functionally, beta-galactosyltransferase that transfers beta-galactose to hydroxylysine residues of type I collagen. By acting on collagen glycosylation, facilitates the formation of collagen triple helix. Also involved in the biosynthesis of collagen type IV. This is Procollagen galactosyltransferase 1 (COLGALT1) from Bos taurus (Bovine).